The following is a 536-amino-acid chain: Multicopper oxidase CueO (536 aa).

The segment at residues Met1–Ala28 is a signal peptide (tat-type signal). 3 Plastocyanin-like domains span residues Lys53–Asp165, Gly229–Leu295, and Phe424–Val536. 4 residues coordinate Cu cation: His101, His103, His141, and His143. 7 residues coordinate Cu cation: His463, His466, His468, His519, Cys520, His521, and His525.

It belongs to the multicopper oxidase family. As to quaternary structure, monomer. It depends on Cu cation as a cofactor. In terms of processing, predicted to be exported by the Tat system. The position of the signal peptide cleavage has not been experimentally proven.

It localises to the periplasm. It catalyses the reaction 4 Cu(+) + O2 + 4 H(+) = 4 Cu(2+) + 2 H2O. In terms of biological role, multicopper oxidase involved in copper homeostasis and copper tolerance under both aerobic and anaerobic conditions. Is responsible for the oxidation of Cu(+) to the less harmful Cu(2+) in the periplasm, thereby preventing Cu(+) from entering the cytoplasm. This chain is Multicopper oxidase CueO (cueO), found in Salmonella typhimurium (strain LT2 / SGSC1412 / ATCC 700720).